The chain runs to 227 residues: Acyl-protein thioesterase 1 (227 aa).

Catalysis depends on charge relay system residues S119, D173, and H207.

The protein belongs to the AB hydrolase superfamily. AB hydrolase 2 family.

The protein resides in the cytoplasm. It localises to the nucleus. It carries out the reaction S-hexadecanoyl-L-cysteinyl-[protein] + H2O = L-cysteinyl-[protein] + hexadecanoate + H(+). In terms of biological role, hydrolyzes fatty acids from S-acylated cysteine residues in proteins with a strong preference for palmitoylated G-alpha proteins over other acyl substrates. Mediates the deacylation of G-alpha proteins such as GPA1 in vivo, but has weak or no activity toward palmitoylated Ras proteins. Has weak lysophospholipase activity in vitro; however such activity may not exist in vivo. In Yarrowia lipolytica (strain CLIB 122 / E 150) (Yeast), this protein is Acyl-protein thioesterase 1.